Here is a 457-residue protein sequence, read N- to C-terminus: Methylenetetrahydrofolate--tRNA-(uracil-5-)-methyltransferase TrmFO (457 aa).

Residue 12–17 (GGGLAG) participates in FAD binding.

The protein belongs to the MnmG family. TrmFO subfamily. It depends on FAD as a cofactor.

The protein localises to the cytoplasm. The catalysed reaction is uridine(54) in tRNA + (6R)-5,10-methylene-5,6,7,8-tetrahydrofolate + NADH + H(+) = 5-methyluridine(54) in tRNA + (6S)-5,6,7,8-tetrahydrofolate + NAD(+). It carries out the reaction uridine(54) in tRNA + (6R)-5,10-methylene-5,6,7,8-tetrahydrofolate + NADPH + H(+) = 5-methyluridine(54) in tRNA + (6S)-5,6,7,8-tetrahydrofolate + NADP(+). Catalyzes the folate-dependent formation of 5-methyl-uridine at position 54 (M-5-U54) in all tRNAs. This is Methylenetetrahydrofolate--tRNA-(uracil-5-)-methyltransferase TrmFO from Myxococcus xanthus (strain DK1622).